The following is a 464-amino-acid chain: UDP-glycosyltransferase 83A1 (464 aa).

Residues Ser295, 341-343 (APQ), 358-366 (HCGWNSTLE), and 380-383 (FADQ) contribute to the UDP-alpha-D-glucose site.

Belongs to the UDP-glycosyltransferase family.

The sequence is that of UDP-glycosyltransferase 83A1 (UGT83A1) from Arabidopsis thaliana (Mouse-ear cress).